The chain runs to 280 residues: Probable 2-(5''-triphosphoribosyl)-3'-dephosphocoenzyme-A synthase (280 aa).

Belongs to the CitG/MdcB family.

It carries out the reaction 3'-dephospho-CoA + ATP = 2'-(5''-triphospho-alpha-D-ribosyl)-3'-dephospho-CoA + adenine. The polypeptide is Probable 2-(5''-triphosphoribosyl)-3'-dephosphocoenzyme-A synthase (Lactiplantibacillus plantarum (strain ATCC BAA-793 / NCIMB 8826 / WCFS1) (Lactobacillus plantarum)).